The following is a 734-amino-acid chain: Photosystem I P700 chlorophyll a apoprotein A2 (734 aa).

The next 8 helical transmembrane spans lie at Ile-46–Ala-69, Leu-135–Gln-158, Leu-175–Ile-199, Ile-273–Tyr-291, Leu-330–Tyr-353, Ala-369–Val-395, Ala-417–His-439, and Phe-517–Val-535. [4Fe-4S] cluster-binding residues include Cys-559 and Cys-568. Transmembrane regions (helical) follow at residues Ala-575 to Trp-596 and Leu-643 to Ile-665. Residues His-654, Met-662, and Tyr-670 each coordinate chlorophyll a. Trp-671 is a phylloquinone binding site. Residues Leu-707–Ala-727 traverse the membrane as a helical segment.

It belongs to the PsaA/PsaB family. The PsaA/B heterodimer binds the P700 chlorophyll special pair and subsequent electron acceptors. PSI consists of a core antenna complex that captures photons, and an electron transfer chain that converts photonic excitation into a charge separation. The eukaryotic PSI reaction center is composed of at least 11 subunits. It depends on P700 is a chlorophyll a/chlorophyll a' dimer, A0 is one or more chlorophyll a, A1 is one or both phylloquinones and FX is a shared 4Fe-4S iron-sulfur center. as a cofactor.

The protein localises to the plastid. It is found in the chloroplast thylakoid membrane. It carries out the reaction reduced [plastocyanin] + hnu + oxidized [2Fe-2S]-[ferredoxin] = oxidized [plastocyanin] + reduced [2Fe-2S]-[ferredoxin]. Functionally, psaA and PsaB bind P700, the primary electron donor of photosystem I (PSI), as well as the electron acceptors A0, A1 and FX. PSI is a plastocyanin-ferredoxin oxidoreductase, converting photonic excitation into a charge separation, which transfers an electron from the donor P700 chlorophyll pair to the spectroscopically characterized acceptors A0, A1, FX, FA and FB in turn. Oxidized P700 is reduced on the lumenal side of the thylakoid membrane by plastocyanin. This is Photosystem I P700 chlorophyll a apoprotein A2 from Chlorokybus atmophyticus (Soil alga).